The chain runs to 156 residues: Small ribosomal subunit protein uS7 (156 aa).

Belongs to the universal ribosomal protein uS7 family. In terms of assembly, part of the 30S ribosomal subunit. Contacts proteins S9 and S11.

Its function is as follows. One of the primary rRNA binding proteins, it binds directly to 16S rRNA where it nucleates assembly of the head domain of the 30S subunit. Is located at the subunit interface close to the decoding center, probably blocks exit of the E-site tRNA. The chain is Small ribosomal subunit protein uS7 from Actinobacillus pleuropneumoniae serotype 5b (strain L20).